We begin with the raw amino-acid sequence, 102 residues long: Small ribosomal subunit protein uS10 (102 aa).

Belongs to the universal ribosomal protein uS10 family. In terms of assembly, part of the 30S ribosomal subunit.

Functionally, involved in the binding of tRNA to the ribosomes. The sequence is that of Small ribosomal subunit protein uS10 from Cenarchaeum symbiosum (strain A).